Here is a 563-residue protein sequence, read N- to C-terminus: MPVTDAATEPAYTVGDYLLDRLAELGVSEIFGVPGDYNLEFLDHIVAHPRLRWVGNANELNAGYAADGYGRLRGMSALVTTFGVGELSAANAVAGSYAEQVPVVHIVGGPSKDAQGTRRALHHSLGDGDFEHFFRVSREITCAQANLMPATARREIDRVLSEVREQKRPGYILLSTDVARFPTEPPEAALPRYTGGTSPRALAMFTEAAAALIGEHRITVLADLLVHRLQAIKELEALLAADVVPHATLMWGKSLLDESSPNFLGIYAGSASAPAVRTAIEEAPVLVTAGVVFTDMVSGFFSQRIDPARTIDVGQYQSSVAGEVFAPLEMGEALQALTAILTRRGVSSPPVASPPAEPLPPPPPREQPLTQKMVWDRVCTALTPGNVVLADQGTSFYGMADHRLPQGVTFIGQPLWGSIGYTLPAALGAAVAHPDRRTVLLIGDGAAQLTVQELGTFAREGLSPVIVVVNNDGYTVERAIHGETAPYNDIVGWKWTEVPNALGVTEHLAFRVQTYGELDDALTAAARHQDRMVLVEVVLPRLEIPRLLVELVRPTSPDGSPRR.

Glu-59 contributes to the thiamine diphosphate binding site. The interval 347-367 is disordered; the sequence is SSPPVASPPAEPLPPPPPREQ. Over residues 351-366 the composition is skewed to pro residues; the sequence is VASPPAEPLPPPPPRE. Positions 394 to 476 are thiamine pyrophosphate binding; that stretch reads TSFYGMADHR…VVVNNDGYTV (83 aa). Residues Asp-444, Asn-471, and Gly-473 each contribute to the Mg(2+) site.

Belongs to the TPP enzyme family. A metal cation is required as a cofactor. It depends on thiamine diphosphate as a cofactor.

Functionally, decarboxylates branched-chain and aromatic alpha-keto acids to aldehydes. The sequence is that of Alpha-keto-acid decarboxylase (kdc) from Mycolicibacterium paratuberculosis (strain ATCC BAA-968 / K-10) (Mycobacterium paratuberculosis).